The following is a 437-amino-acid chain: GTPase Era, mitochondrial (437 aa).

A mitochondrion-targeting transit peptide spans 1–43 (MAASSWRGAVLLRTVSGLWQAGPDAAREWMTRLPSLLGFQQRC). Residues 112–330 (RVLRVVLLGA…QYLLAQARPG (219 aa)) form the Era-type G domain. The tract at residues 120–127 (GAPNAGKS) is G1. 120–127 (GAPNAGKS) contributes to the GTP binding site. Residues 146–150 (HTTRS) are G2. The G3 stretch occupies residues 167–170 (DTPG). 167 to 171 (DTPGL) provides a ligand contact to GTP. A Phosphoserine modification is found at Ser-173. 236–239 (NKVD) contacts GTP. The tract at residues 236–239 (NKVD) is G4. The segment at 264–296 (LKTKQALRSRPDTHCPSPAAQGPNPQPVRDPQQ) is disordered. The tract at residues 308–310 (LSA) is G5. Residues 360-437 (LPEEVPYNVQ…QLRLSVKLLK (78 aa)) enclose the KH type-2 domain.

This sequence belongs to the TRAFAC class TrmE-Era-EngA-EngB-Septin-like GTPase superfamily. Era GTPase family.

The protein localises to the mitochondrion matrix. It is found in the mitochondrion inner membrane. In terms of biological role, probable GTPase that plays a role in the mitochondrial ribosomal small subunit assembly. Specifically binds the 12S mitochondrial rRNA (12S mt-rRNA) to a 33 nucleotide section delineating the 3' terminal stem-loop region. May act as a chaperone that protects the 12S mt-rRNA on the 28S mitoribosomal subunit during ribosomal small subunit assembly. This is GTPase Era, mitochondrial (ERAL1) from Bos taurus (Bovine).